Consider the following 324-residue polypeptide: Putative F-box/kelch-repeat protein At5g28160 (324 aa).

Residues 7 to 54 (RPSFLSLPDEIILSCLARISRSYYPKLSLVCKTFRTLLISNELIVARL) enclose the F-box domain. The Kelch repeat unit spans residues 170–216 (KIYVMGGCMADESVNWGEVFDIKTQTWEALPDPGPEFRFSSIRKIDV).

This Arabidopsis thaliana (Mouse-ear cress) protein is Putative F-box/kelch-repeat protein At5g28160.